The chain runs to 96 residues: Beta-defensin 132 (96 aa).

A signal peptide spans 1–22; that stretch reads MKFLLLVLAALRFLTQVIPASG. 3 disulfide bridges follow: Cys-27–Cys-55, Cys-35–Cys-49, and Cys-39–Cys-56. Residues 74-96 form a disordered region; that stretch reads HWQSRRRNTQRKDKKQQTTVTSS. The span at 76–87 shows a compositional bias: basic residues; that stretch reads QSRRRNTQRKDK.

This sequence belongs to the beta-defensin family.

The protein localises to the secreted. Its function is as follows. Has antibacterial activity. This chain is Beta-defensin 132 (DEFB132), found in Hylobates lar (Lar gibbon).